The chain runs to 302 residues: ATP synthase subunit b 1 (302 aa).

The helical transmembrane segment at Trp-5–Leu-22 threads the bilayer. The disordered stretch occupies residues Gly-278 to Ala-302.

Belongs to the ATPase B chain family. In terms of assembly, F-type ATPases have 2 components, F(1) - the catalytic core - and F(0) - the membrane proton channel. F(1) has five subunits: alpha(3), beta(3), gamma(1), delta(1), epsilon(1). F(0) has three main subunits: a(1), b(2) and c(10-14). The alpha and beta chains form an alternating ring which encloses part of the gamma chain. F(1) is attached to F(0) by a central stalk formed by the gamma and epsilon chains, while a peripheral stalk is formed by the delta and b chains.

The protein localises to the cell inner membrane. F(1)F(0) ATP synthase produces ATP from ADP in the presence of a proton or sodium gradient. F-type ATPases consist of two structural domains, F(1) containing the extramembraneous catalytic core and F(0) containing the membrane proton channel, linked together by a central stalk and a peripheral stalk. During catalysis, ATP synthesis in the catalytic domain of F(1) is coupled via a rotary mechanism of the central stalk subunits to proton translocation. Functionally, component of the F(0) channel, it forms part of the peripheral stalk, linking F(1) to F(0). The chain is ATP synthase subunit b 1 from Pseudoalteromonas atlantica (strain T6c / ATCC BAA-1087).